Reading from the N-terminus, the 29-residue chain is Tail virion protein G7P (29 aa).

The chain crosses the membrane as a helical span at residues 8-28; that stretch reads VVIALGLVISFGLGAITAGVL.

It belongs to the inovirus G7P protein family.

The protein resides in the virion. It is found in the host membrane. Its function is as follows. May initiate with G9P the virion concomitant assembly-budding process, by interacting with the packaging signal of the viral genome. The assembly-budding takes place at the host inner membrane. In turn, G7P and G9P are present at the end of the filamentous virion that emerges first from the bacterial host. In Escherichia coli (Bacteriophage I2-2), this protein is Tail virion protein G7P (VII).